The chain runs to 548 residues: Chaperonin GroEL (548 aa).

Residues threonine 29–proline 32, lysine 50, aspartate 86–threonine 90, glycine 414, and aspartate 493 contribute to the ATP site.

Belongs to the chaperonin (HSP60) family. Forms a cylinder of 14 subunits composed of two heptameric rings stacked back-to-back. Interacts with the co-chaperonin GroES.

The protein localises to the cytoplasm. The catalysed reaction is ATP + H2O + a folded polypeptide = ADP + phosphate + an unfolded polypeptide.. In terms of biological role, together with its co-chaperonin GroES, plays an essential role in assisting protein folding. The GroEL-GroES system forms a nano-cage that allows encapsulation of the non-native substrate proteins and provides a physical environment optimized to promote and accelerate protein folding. The protein is Chaperonin GroEL of Desulfatibacillum aliphaticivorans.